Here is a 270-residue protein sequence, read N- to C-terminus: Type III pantothenate kinase (270 aa).

An ATP-binding site is contributed by 16 to 23 (EIGNTTAM). Residues Y106 and 113-116 (GADR) each bind substrate. The Proton acceptor role is filled by D115. Position 136 (D136) interacts with K(+). T139 serves as a coordination point for ATP. T191 contacts substrate.

This sequence belongs to the type III pantothenate kinase family. Homodimer. NH4(+) is required as a cofactor. K(+) serves as cofactor.

Its subcellular location is the cytoplasm. It carries out the reaction (R)-pantothenate + ATP = (R)-4'-phosphopantothenate + ADP + H(+). It participates in cofactor biosynthesis; coenzyme A biosynthesis; CoA from (R)-pantothenate: step 1/5. Catalyzes the phosphorylation of pantothenate (Pan), the first step in CoA biosynthesis. This is Type III pantothenate kinase from Chlorobium luteolum (strain DSM 273 / BCRC 81028 / 2530) (Pelodictyon luteolum).